Here is a 337-residue protein sequence, read N- to C-terminus: Protein EXORDIUM-like 3 (337 aa).

The signal sequence occupies residues 1–25 (MHSLPVNLVLTVLTVFLTSPAQVIG). N34, N66, and N119 each carry an N-linked (GlcNAc...) asparagine glycan.

The protein belongs to the EXORDIUM family.

The protein localises to the secreted. The protein resides in the extracellular space. Its subcellular location is the apoplast. Its function is as follows. May play a role in a brassinosteroid-dependent regulation of growth and development. The chain is Protein EXORDIUM-like 3 (EXL3) from Arabidopsis thaliana (Mouse-ear cress).